A 407-amino-acid polypeptide reads, in one-letter code: Multifunctional CCA protein (407 aa).

2 residues coordinate ATP: Gly-8 and Arg-11. The CTP site is built by Gly-8 and Arg-11. Asp-21 and Asp-23 together coordinate Mg(2+). The ATP site is built by Arg-91, Arg-137, and Arg-140. Residues Arg-91, Arg-137, and Arg-140 each contribute to the CTP site. Residues 228–329 enclose the HD domain; that stretch reads TGIHTLLVAE…VKIFNKLDVW (102 aa).

The protein belongs to the tRNA nucleotidyltransferase/poly(A) polymerase family. Bacterial CCA-adding enzyme type 1 subfamily. Monomer. Can also form homodimers and oligomers. Mg(2+) is required as a cofactor. Requires Ni(2+) as cofactor.

It catalyses the reaction a tRNA precursor + 2 CTP + ATP = a tRNA with a 3' CCA end + 3 diphosphate. It carries out the reaction a tRNA with a 3' CCA end + 2 CTP + ATP = a tRNA with a 3' CCACCA end + 3 diphosphate. Its function is as follows. Catalyzes the addition and repair of the essential 3'-terminal CCA sequence in tRNAs without using a nucleic acid template. Adds these three nucleotides in the order of C, C, and A to the tRNA nucleotide-73, using CTP and ATP as substrates and producing inorganic pyrophosphate. tRNA 3'-terminal CCA addition is required both for tRNA processing and repair. Also involved in tRNA surveillance by mediating tandem CCA addition to generate a CCACCA at the 3' terminus of unstable tRNAs. While stable tRNAs receive only 3'-terminal CCA, unstable tRNAs are marked with CCACCA and rapidly degraded. The protein is Multifunctional CCA protein of Vibrio vulnificus (strain CMCP6).